Consider the following 294-residue polypeptide: StAR-related lipid transfer protein 3 (294 aa).

One can recognise an MENTAL domain in the interval 1-66 (DGYICNNGMD…YSPPESLAGS (66 aa)). Residues 55-61 (QFYSPPE) carry the FFAT motif. Positions 58–77 (SPPESLAGSEEDLDEEGLGR) are disordered. Positions 79-292 (AVSPQEKALV…LRQRIRDLRS (214 aa)) constitute an START domain.

This sequence belongs to the STARD3 family. Homodimer. Phosphorylated. Phosphorylation allows the tethering of two membranes that participates in the formation of ER-endosome contacts. Phosphorylation of FFAT motif drives membrane tethering between the endoplasmic reticulum and late endosomes that in turn allows the efficient transport of sterol mediated by the START domain.

Its subcellular location is the late endosome membrane. The enzyme catalyses cholesterol(in) = cholesterol(out). In terms of biological role, sterol-binding protein that mediates cholesterol transport from the endoplasmic reticulum to endosomes. The sterol transport mechanism is triggered by phosphorylation of FFAT motif that leads to membrane tethering between the endoplasmic reticulum and late endosomes. Acts as a lipid transfer protein that redirects sterol to the endosome at the expense of the cell membrane and favors membrane formation inside endosomes. This Salvelinus fontinalis (Brook trout) protein is StAR-related lipid transfer protein 3.